Here is a 280-residue protein sequence, read N- to C-terminus: Digeranylgeranylglyceryl phosphate synthase (280 aa).

Transmembrane regions (helical) follow at residues A4–L24, I27–I47, L83–L103, P104–K124, L128–I148, G150–A170, A199–Y219, W222–I242, and K260–L280.

Belongs to the UbiA prenyltransferase family. DGGGP synthase subfamily. Mg(2+) is required as a cofactor.

Its subcellular location is the cell membrane. The catalysed reaction is sn-3-O-(geranylgeranyl)glycerol 1-phosphate + (2E,6E,10E)-geranylgeranyl diphosphate = 2,3-bis-O-(geranylgeranyl)-sn-glycerol 1-phosphate + diphosphate. It participates in membrane lipid metabolism; glycerophospholipid metabolism. Its function is as follows. Prenyltransferase that catalyzes the transfer of the geranylgeranyl moiety of geranylgeranyl diphosphate (GGPP) to the C2 hydroxyl of (S)-3-O-geranylgeranylglyceryl phosphate (GGGP). This reaction is the second ether-bond-formation step in the biosynthesis of archaeal membrane lipids. This chain is Digeranylgeranylglyceryl phosphate synthase, found in Methanospirillum hungatei JF-1 (strain ATCC 27890 / DSM 864 / NBRC 100397 / JF-1).